A 282-amino-acid chain; its full sequence is 1D-myo-inositol 2-acetamido-2-deoxy-alpha-D-glucopyranoside deacetylase (282 aa).

Residues histidine 6, aspartate 9, and histidine 141 each coordinate Zn(2+).

It belongs to the MshB deacetylase family. Zn(2+) is required as a cofactor.

It catalyses the reaction 1D-myo-inositol 2-acetamido-2-deoxy-alpha-D-glucopyranoside + H2O = 1D-myo-inositol 2-amino-2-deoxy-alpha-D-glucopyranoside + acetate. In terms of biological role, catalyzes the deacetylation of 1D-myo-inositol 2-acetamido-2-deoxy-alpha-D-glucopyranoside (GlcNAc-Ins) in the mycothiol biosynthesis pathway. The protein is 1D-myo-inositol 2-acetamido-2-deoxy-alpha-D-glucopyranoside deacetylase of Nocardiopsis dassonvillei (strain ATCC 23218 / DSM 43111 / CIP 107115 / JCM 7437 / KCTC 9190 / NBRC 14626 / NCTC 10488 / NRRL B-5397 / IMRU 509) (Actinomadura dassonvillei).